Reading from the N-terminus, the 155-residue chain is Microsomal glutathione S-transferase 1 (155 aa).

The Lumenal segment spans residues 3–9 (DLTQVMD). A helical transmembrane segment spans residues 10-33 (DEVFMAFASYATIILSKMMLMSTA). Residues 34 to 62 (TAFYRLTRKVFANPEDCVAFGKGENAKKY) are Cytoplasmic-facing. Arg38 contributes to the glutathione binding site. Lys42, Lys55, and Lys60 each carry N6-acetyllysine. A helical membrane pass occupies residues 63–96 (LRTDDRVERVRRAHLNDLENIIPFLGIGLLYSLS). Residues Arg73, Arg74, His76, and Glu81 each coordinate glutathione. Over 97–99 (GPD) the chain is Lumenal. The helical transmembrane segment at 100 to 123 (PSTAILHFRLFVGARIYHTIAYLT) threads the bilayer. Tyr121 provides a ligand contact to glutathione. Topologically, residues 124–128 (PLPQP) are cytoplasmic. Residues 129–148 (NRALSFFVGYGVTLSMAYRL) form a helical membrane-spanning segment. Topologically, residues 149–155 (LKSKLYL) are lumenal.

Belongs to the MAPEG family. Homotrimer; The trimer binds only one molecule of glutathione. As to expression, highly expressed in liver.

Its subcellular location is the endoplasmic reticulum membrane. The protein localises to the mitochondrion outer membrane. It carries out the reaction RX + glutathione = an S-substituted glutathione + a halide anion + H(+). In terms of biological role, conjugation of reduced glutathione to a wide number of exogenous and endogenous hydrophobic electrophiles. In Homo sapiens (Human), this protein is Microsomal glutathione S-transferase 1 (MGST1).